A 343-amino-acid polypeptide reads, in one-letter code: Histone H1.8 (343 aa).

Low complexity predominate over residues 1 to 32 (MAPGSIASSDTSSSTSSSSTSSASSASAEGSS). Disordered stretches follow at residues 1-50 (MAPG…VRAP) and 122-343 (ATGS…EAEG). An H15 domain is found at 52-130 (RHPPVLRMVL…GATGSFKLVP (79 aa)). The segment covering 132–142 (DKRKIPPRKTA) has biased composition (basic residues). Basic and acidic residues-rich tracts occupy residues 150-183 (EGKD…ERAA), 199-219 (QTKD…RPDK), and 235-247 (KVKE…ADTK). A Nuclear localization signal motif is present at residues 161–176 (KKDPANTVEVKKGSRK). The segment covering 253–265 (QPGSQSSKSTVTK) has biased composition (polar residues).

Belongs to the histone H1/H5 family. As to expression, oocyte (at protein level).

It localises to the cytoplasm. It is found in the nucleus. The protein resides in the chromosome. In terms of biological role, may play a key role in the control of gene expression during oogenesis and early embryogenesis, presumably through the perturbation of chromatin structure. Essential for meiotic maturation of germinal vesicle-stage oocytes. The somatic type linker histone H1c is rapidly replaced by H1oo in a donor nucleus transplanted into an oocyte. The greater mobility of H1oo as compared to H1c may contribute to this rapid replacement and increased instability of the embryonic chromatin structure. The rapid replacement of H1c with H1oo may play an important role in nuclear remodeling. This chain is Histone H1.8, found in Bos taurus (Bovine).